The sequence spans 440 residues: MQAYFDQLDRVRYEGSKSSNPLAFRHYNPDELVLGKRMEEHLRFAACYWHTFCWNGADMFGVGAFNRPWQQPGEALALAKRKADVAFEFFHKLHVPFYCFHDVDVSPEGASLKEYINNFAQMVDVLAAKQEESGVKLLWGTANCFTNPRYGAGAATNPDPEVFSWAATQVVTAMEATHKLGGENYVLWGGREGYETLLNTDLRQEREQLGRFMQMVVEHKHKIGFQGTLLIEPKPQEPTKHQYDYDAATVYGFLKQFGLEKEIKLNIEANHATLAGHSFHHEIATAIALGLFGSVDANRGDAQLGWDTDQFPNSVEENALVMYEILKAGGFTTGGLNFDAKVRRQSTDKYDLFYGHIGAMDTMALALKIAARMIEDGELDKRIAQRYSGWNSELGQQILKGQMSLADLAKYAQEHNLSPVHQSGRQEQLENLVNHYLFDK.

Residues histidine 101 and aspartate 104 contribute to the active site. Residues glutamate 232, glutamate 268, histidine 271, aspartate 296, aspartate 307, aspartate 309, and aspartate 339 each coordinate Mg(2+).

Belongs to the xylose isomerase family. As to quaternary structure, homotetramer. The cofactor is Mg(2+).

The protein localises to the cytoplasm. The enzyme catalyses alpha-D-xylose = alpha-D-xylulofuranose. The protein is Xylose isomerase of Escherichia coli (strain SE11).